Reading from the N-terminus, the 258-residue chain is 14-3-3 protein 6 (258 aa).

The segment at 238-258 (DMQDDGTDEIKEATPKPDDNE) is disordered. Over residues 245–258 (DEIKEATPKPDDNE) the composition is skewed to basic and acidic residues.

It belongs to the 14-3-3 family. As to quaternary structure, homodimer.

The sequence is that of 14-3-3 protein 6 (TFT6) from Solanum lycopersicum (Tomato).